Reading from the N-terminus, the 145-residue chain is Basic phospholipase A2 cPt09 (145 aa).

Positions 1 to 21 (MYPAHLLVLLAVCVSLLGAST) are cleaved as a signal peptide. Residues 22–27 (IPPLPL) constitute a propeptide that is removed on maturation. 7 disulfide bridges follow: C38–C98, C54–C144, C56–C72, C71–C125, C78–C118, C87–C111, and C105–C116. The Ca(2+) site is built by Y55, G57, and G59. H75 is a catalytic residue. D76 is a binding site for Ca(2+). D119 is an active-site residue.

The protein belongs to the phospholipase A2 family. Group I subfamily. D49 sub-subfamily. It depends on Ca(2+) as a cofactor. In terms of tissue distribution, expressed by the venom gland.

It is found in the secreted. The catalysed reaction is a 1,2-diacyl-sn-glycero-3-phosphocholine + H2O = a 1-acyl-sn-glycero-3-phosphocholine + a fatty acid + H(+). PLA2 catalyzes the calcium-dependent hydrolysis of the 2-acyl groups in 3-sn-phosphoglycerides. The protein is Basic phospholipase A2 cPt09 of Laticauda semifasciata (Black-banded sea krait).